Here is a 159-residue protein sequence, read N- to C-terminus: 2-C-methyl-D-erythritol 2,4-cyclodiphosphate synthase (159 aa).

A divalent metal cation-binding residues include D10 and H12. 4-CDP-2-C-methyl-D-erythritol 2-phosphate is bound by residues 10–12 (DVH) and 36–37 (HS). A divalent metal cation is bound at residue H44. 4-CDP-2-C-methyl-D-erythritol 2-phosphate is bound by residues 58 to 60 (DIG), 134 to 137 (TTSE), F141, and R144.

Belongs to the IspF family. In terms of assembly, homotrimer. A divalent metal cation serves as cofactor.

It catalyses the reaction 4-CDP-2-C-methyl-D-erythritol 2-phosphate = 2-C-methyl-D-erythritol 2,4-cyclic diphosphate + CMP. It participates in isoprenoid biosynthesis; isopentenyl diphosphate biosynthesis via DXP pathway; isopentenyl diphosphate from 1-deoxy-D-xylulose 5-phosphate: step 4/6. Involved in the biosynthesis of isopentenyl diphosphate (IPP) and dimethylallyl diphosphate (DMAPP), two major building blocks of isoprenoid compounds. Catalyzes the conversion of 4-diphosphocytidyl-2-C-methyl-D-erythritol 2-phosphate (CDP-ME2P) to 2-C-methyl-D-erythritol 2,4-cyclodiphosphate (ME-CPP) with a corresponding release of cytidine 5-monophosphate (CMP). The sequence is that of 2-C-methyl-D-erythritol 2,4-cyclodiphosphate synthase from Cereibacter sphaeroides (strain ATCC 17025 / ATH 2.4.3) (Rhodobacter sphaeroides).